Reading from the N-terminus, the 397-residue chain is Tryptophan synthase beta chain (397 aa).

At K86 the chain carries N6-(pyridoxal phosphate)lysine.

Belongs to the TrpB family. As to quaternary structure, tetramer of two alpha and two beta chains. Pyridoxal 5'-phosphate is required as a cofactor.

The catalysed reaction is (1S,2R)-1-C-(indol-3-yl)glycerol 3-phosphate + L-serine = D-glyceraldehyde 3-phosphate + L-tryptophan + H2O. Its pathway is amino-acid biosynthesis; L-tryptophan biosynthesis; L-tryptophan from chorismate: step 5/5. Functionally, the beta subunit is responsible for the synthesis of L-tryptophan from indole and L-serine. This is Tryptophan synthase beta chain from Tolumonas auensis (strain DSM 9187 / NBRC 110442 / TA 4).